A 127-amino-acid chain; its full sequence is uncharacterized protein (127 aa).

Residues 1–26 (MKAIYALLAVVALALVAVSLFSQSDS) form the signal peptide.

This is an uncharacterized protein from Archaeoglobus fulgidus (strain ATCC 49558 / DSM 4304 / JCM 9628 / NBRC 100126 / VC-16).